The chain runs to 130 residues: Small ribosomal subunit protein uS9 (130 aa).

Belongs to the universal ribosomal protein uS9 family.

The protein is Small ribosomal subunit protein uS9 of Shewanella baltica (strain OS155 / ATCC BAA-1091).